A 342-amino-acid polypeptide reads, in one-letter code: NADH-quinone oxidoreductase subunit H (342 aa).

8 helical membrane-spanning segments follow: residues 15 to 35 (LLIITALQALAILVPLMLMVA), 86 to 106 (VLFILAPLLTFILAMIAWAVV), 119 to 139 (VGVLYLFAISSLGVYGVIIAG), 159 to 179 (VSYEVSIGFVMVAILLCVGSL), 190 to 210 (HVWFVLPMLPMAVIFFISGLA), 251 to 271 (FMICAMTTLLFLGGWLPPFDI), 277 to 297 (VPGPIWFVLKVCALMFVFFWV), and 316 to 336 (VFLPFSLVWLLLTACVLELAG).

The protein belongs to the complex I subunit 1 family. As to quaternary structure, NDH-1 is composed of 14 different subunits. Subunits NuoA, H, J, K, L, M, N constitute the membrane sector of the complex.

The protein localises to the cell inner membrane. The enzyme catalyses a quinone + NADH + 5 H(+)(in) = a quinol + NAD(+) + 4 H(+)(out). Functionally, NDH-1 shuttles electrons from NADH, via FMN and iron-sulfur (Fe-S) centers, to quinones in the respiratory chain. The immediate electron acceptor for the enzyme in this species is believed to be ubiquinone. Couples the redox reaction to proton translocation (for every two electrons transferred, four hydrogen ions are translocated across the cytoplasmic membrane), and thus conserves the redox energy in a proton gradient. This subunit may bind ubiquinone. The sequence is that of NADH-quinone oxidoreductase subunit H from Granulibacter bethesdensis (strain ATCC BAA-1260 / CGDNIH1).